We begin with the raw amino-acid sequence, 556 residues long: Formate--tetrahydrofolate ligase (556 aa).

65–72 (TPAGEGKS) contacts ATP.

It belongs to the formate--tetrahydrofolate ligase family.

It catalyses the reaction (6S)-5,6,7,8-tetrahydrofolate + formate + ATP = (6R)-10-formyltetrahydrofolate + ADP + phosphate. Its pathway is one-carbon metabolism; tetrahydrofolate interconversion. The sequence is that of Formate--tetrahydrofolate ligase from Streptococcus pneumoniae serotype 4 (strain ATCC BAA-334 / TIGR4).